A 209-amino-acid chain; its full sequence is Claudin-4 (209 aa).

Residues 1-9 (MASMGLQVM) are Cytoplasmic-facing. The interaction with EPHA2 stretch occupies residues 1-103 (MASMGLQVMG…GVLLSVVGGK (103 aa)). The chain crosses the membrane as a helical span at residues 10-30 (GIALAVLGWLGAILSCALPMW). Topologically, residues 31–81 (RVTAFIGSNIVTSQTIWEGLWMNCVVQSTGQMQCKVYDSLLALPQDLQAAR) are extracellular. Cysteines 54 and 64 form a disulfide. The helical transmembrane segment at 82 to 102 (ALIVICIILAVFGVLLSVVGG) threads the bilayer. Residues 103-117 (KCTNCVDDESSKAKI) lie on the Cytoplasmic side of the membrane. The chain crosses the membrane as a helical span at residues 118–138 (MIVAGVVFLLAGLLVMVPVSW). Topologically, residues 139–160 (TANNVIRDFYNPLVASGQKREM) are extracellular. The helical transmembrane segment at 161–181 (GASLYVGWAAAGLLILGGALL) threads the bilayer. Over 182-209 (CFNCPPRNDKPYSAKYSAARSAPASNYV) the chain is Cytoplasmic. Tyr208 is subject to Phosphotyrosine; by EPHA2. Residues 208 to 209 (YV) form an interactions with TJP1, TJP2 and TJP3 region.

The protein belongs to the claudin family. Interacts with EPHA2; phosphorylates CLDN4 and may regulate tight junctions. Directly interacts with TJP1/ZO-1, TJP2/ZO-2 and TJP3/ZO-3. Interacts with CLDN1. Interacts with CLDN8. In terms of processing, phosphorylated. Phosphorylation by EPHA2 is stimulated by EFNA1 and alters interaction with TJP1.

The protein resides in the cell junction. Its subcellular location is the tight junction. It localises to the cell membrane. In terms of biological role, channel-forming tight junction protein that mediates paracellular chloride transport in the kidney. Plays a critical role in the paracellular reabsorption of filtered chloride in the kidney collecting ducts. Claudins play a major role in tight junction-specific obliteration of the intercellular space, through calcium-independent cell-adhesion activity. This Bos taurus (Bovine) protein is Claudin-4 (CLDN4).